The sequence spans 3008 residues: Genome polyprotein (3008 aa).

The residue at position 2 (Ser-2) is an N-acetylserine; by host. The segment at 2–23 (STNPKPQRKTKRNTNRRPMDVK) is interaction with STAT1. The interval 2–58 (STNPKPQRKTKRNTNRRPMDVKFPGGGQIVGGVYLLPRRGPRLGVRATRKTSERSQP) is interaction with EIF2AK2/PKR. Residues 2–59 (STNPKPQRKTKRNTNRRPMDVKFPGGGQIVGGVYLLPRRGPRLGVRATRKTSERSQPR) form an interaction with DDX3X region. The segment at 2 to 75 (STNPKPQRKT…PKARRPEGRS (74 aa)) is disordered. Topologically, residues 2–168 (STNPKPQRKT…EDGINYATGN (167 aa)) are cytoplasmic. Short sequence motifs (nuclear localization signal) lie at residues 5 to 13 (PKPQRKTKR) and 38 to 43 (PRRGPR). The span at 7–16 (PQRKTKRNTN) shows a compositional bias: basic residues. Over residues 32–47 (GGVYLLPRRGPRLGVR) the composition is skewed to low complexity. Position 53 is a phosphoserine; by host (Ser-53). 2 consecutive short sequence motifs (nuclear localization signal) follow at residues 58 to 64 (PRGRRQP) and 66 to 71 (PKARRP). Positions 58-68 (PRGRRQPIPKA) are enriched in basic residues. A phosphoserine; by host mark is found at Ser-99 and Ser-116. An important for endoplasmic reticulum and mitochondrial localization region spans residues 112-152 (PRGRSRNLGKVIDTLTCGFADLMGYIPLVGAPVGSVARALA). The interval 122 to 173 (VIDTLTCGFADLMGYIPLVGAPVGSVARALAHGVRALEDGINYATGNLPGCS) is interaction with APOA2. The segment at 164–167 (YATG) is important for lipid droplets localization. The helical transmembrane segment at 169-189 (LPGCSFSIFLLALLSCLTVPA) threads the bilayer. A propeptide spans 178–191 (LLALLSCLTVPASA) (ER anchor for the core protein, removed in mature form by host signal peptidase). Residues 190–358 (SAVNYRNVSG…SGGHWGVLVG (169 aa)) are Lumenal-facing. 3 N-linked (GlcNAc...) asparagine; by host glycosylation sites follow: Asn-196, Asn-209, and Asn-234. The interval 265–296 (MVGAATVCSGLYIGDLCGGLFLVGQMFSFRPR) is important for fusion. A glycan (N-linked (GlcNAc...) asparagine; by host) is linked at Asn-305. A helical membrane pass occupies residues 359 to 379 (VAYFSMQANWAKVILVLFLFA). At 380-725 (GVDAETHVSG…WEYVVLAFLL (346 aa)) the chain is on the lumenal side. Residues 385 to 412 (THVSGAAVGRSTAGLANLFSSGSKQNLQ) form an HVR1 region. 3 N-linked (GlcNAc...) (high mannose) asparagine; by host glycosylation sites follow: Asn-417, Asn-423, and Asn-430. Intrachain disulfides connect Cys-429/Cys-553, Cys-452/Cys-459, Cys-487/Cys-495, and Cys-504/Cys-509. N-linked (GlcNAc...) asparagine; by host glycosylation occurs at Asn-448. An HVR2 region spans residues 475 to 479 (ANISG). A glycan (N-linked (GlcNAc...) asparagine; by host) is linked at Asn-476. Positions 481–494 (SDDRPYCWHYAPRP) are CD81-binding 1. The N-linked (GlcNAc...) asparagine; by host glycan is linked to Asn-533. Residues 545-552 (PPHGAWFG) form a CD81-binding 2 region. N-linked (GlcNAc...) asparagine; by host glycosylation is present at Asn-557. Disulfide bonds link Cys-565–Cys-570, Cys-581–Cys-585, Cys-597–Cys-620, and Cys-607–Cys-644. 2 N-linked (GlcNAc...) (high mannose) asparagine; by host glycosylation sites follow: Asn-623 and Asn-645. A disulfide bridge links Cys-652 with Cys-677. The interval 660-671 (VELSPLLLTTTA) is PKR/eIF2-alpha phosphorylation homology domain (PePHD). The helical transmembrane segment at 726-746 (LADARVSAYLWMMFMVSQVEA) threads the bilayer. Over 747-757 (ALSNLININAA) the chain is Lumenal. A helical membrane pass occupies residues 758–778 (SAAGAQGFWYAILFICIVWHV). Over 779–782 (KGRF) the chain is Cytoplasmic. The helical transmembrane segment at 783–803 (PAAAAYAACGLWPCFLLLLML) threads the bilayer. The Lumenal portion of the chain corresponds to 804–813 (PERAYAYDQE). A helical transmembrane segment spans residues 814-834 (VAGSLGGAIVVMLTILTLSPH). Over 835 to 881 (YKLWLARGLWWIQYFIARTEAVLHVYIPSFNVRGPRDSVIVLAVLVC) the chain is Cytoplasmic. The chain crosses the membrane as a helical span at residues 882–902 (PDLVFDITKYLLAILGPLHIL). Topologically, residues 903 to 928 (QASLLRIPYFVRAQALVKICSLLRGV) are lumenal. Positions 903 to 1026 (QASLLRIPYF…TETSKGWRLL (124 aa)) constitute a Peptidase C18 domain. Positions 904-1206 (ASLLRIPYFV…PVESLETTMR (303 aa)) are protease NS2-3. Cys-922 carries S-palmitoyl cysteine; by host lipidation. The helical transmembrane segment at 929-949 (VYGKYFQMVVLKSRGLTGTYI) threads the bilayer. The interval 929–949 (VYGKYFQMVVLKSRGLTGTYI) is interaction with host SCPS1. At 950 to 1657 (YDHLTPMSDW…CMSADLEVVT (708 aa)) the chain is on the cytoplasmic side. Catalysis depends on for protease NS2 activity; shared with dimeric partner residues His-952, Glu-972, and Cys-993. Residues 1027-1208 (APITAYAQQT…ESLETTMRSP (182 aa)) enclose the Peptidase S29 domain. Residues His-1083 and Asp-1107 each act as charge relay system; for serine protease NS3 activity in the active site. 2 residues coordinate Zn(2+): Cys-1123 and Cys-1125. Ser-1165 functions as the Charge relay system; for serine protease NS3 activity in the catalytic mechanism. The Zn(2+) site is built by Cys-1171 and His-1175. The Helicase ATP-binding domain maps to 1217–1369 (PAVPQTYQVA…SNIEEVALPT (153 aa)). Residue 1230 to 1237 (APTGSGKS) participates in ATP binding. Mg(2+) contacts are provided by Ser-1237 and Glu-1317. Residues 1316 to 1319 (DECY) carry the DECH box motif. Residues 1486–1498 (QRRGRTGRGRLGT) form an RNA-binding region. A helical membrane pass occupies residues 1658 to 1678 (STWVLVGGVLAALAAYCLSVG). Residues 1679–1690 (SVVIVGRVVLSG) form an NS3-binding region. The Cytoplasmic segment spans residues 1679–1805 (SVVIVGRVVL…AVTSPLTTQQ (127 aa)). Residues 1806-1826 (TLLFNILGGWVASQIRDSDAS) traverse the membrane as a helical segment. The Lumenal segment spans residues 1827–1828 (TA). A helical membrane pass occupies residues 1829–1849 (FVVSGLAGAAVGSVGLGKILV). Residue Asp-1850 is a topological domain, cytoplasmic. A helical transmembrane segment spans residues 1851–1871 (ILPGYGAGVRGAVVTFKIMSG). Residues 1872–1881 (EMPSTEDLVN) lie on the Lumenal side of the membrane. Residues 1882 to 1902 (LLPAILSPGALVVEVVCPAIL) form a helical membrane-spanning segment. Residues 1903–1972 (RRHVGPGEGA…WINEDCSTPC (70 aa)) are Cytoplasmic-facing. Cys-1972 carries the S-palmitoyl cysteine; by host lipid modification. The stretch at 1973 to 2002 (AESWLWEVWDWVLHVLSDFKTCLKAKFVPL) is an intramembrane region. Residues 2003-2987 (MPGIPLLSWP…YHSMSHARPR (985 aa)) are Cytoplasmic-facing. Zn(2+)-binding residues include Cys-2029, Cys-2031, and Cys-2052. Residues 2120–2208 (ELFTEVDGIR…ASSSASQLSP (89 aa)) form an FKBP8-binding region. A transcriptional activation region spans residues 2120-2329 (ELFTEVDGIR…PVPSPRRKRT (210 aa)). Positions 2135–2139 (PKCKP) are interaction with non-structural protein 4A. An interaction with host SKP2 region spans residues 2189–2435 (RLARGSRPSL…ALVTPCAAEE (247 aa)). 5 positions are modified to phosphoserine; by host: Ser-2194, Ser-2197, Ser-2201, Ser-2204, and Ser-2207. Positions 2210 to 2245 (LLQATCTAPHDSPGTDLLEANLLWGSTATRVETDEK) are ISDR. The tract at residues 2210-2272 (LLQATCTAPH…REVSVAAEIL (63 aa)) is interaction with EIF2AK2/PKR. An NS4B-binding region spans residues 2245-2303 (KVIILDSFESCVAEQNDDREVSVAAEILRPTKKFPPALPIWARPDYNPPLTETWKQQDY). The tract at residues 2296–2373 (ETWKQQDYQA…TPTETTDSGP (78 aa)) is V3. The SH3-binding motif lies at 2319 to 2322 (PPVP). Positions 2324–2332 (PRRKRTVQL) match the Nuclear localization signal motif. Residues 2346-2406 (AKTFGQSEPS…DPDLTSDSWS (61 aa)) are disordered. Residue Lys-2347 forms a Glycyl lysine isopeptide (Lys-Gly) (interchain with G-Cter in ubiquitin) linkage. Ser-2446 carries the phosphoserine; by host modification. Positions 2631–2749 (PMGFSYDTRC…IAESDGVEED (119 aa)) constitute a RdRp catalytic domain. Residues Asp-2637, Asp-2735, and Asp-2736 each coordinate Mg(2+). Residues 2988 to 3008 (YLLLCLLILTVGVGIFLLPAR) form a helical membrane-spanning segment.

This sequence belongs to the hepacivirus polyprotein family. Homooligomer. Interacts with E1 (via C-terminus). Interacts with the non-structural protein 5A. Interacts (via N-terminus) with host STAT1 (via SH2 domain); this interaction results in decreased STAT1 phosphorylation and ubiquitin-mediated proteasome-dependent STAT1 degradation, leading to decreased IFN-stimulated gene transcription. Interacts with host STAT3; this interaction constitutively activates STAT3. Interacts with host LTBR receptor. Interacts with host TNFRSF1A receptor and possibly induces apoptosis. Interacts with host HNRPK. Interacts with host YWHAE. Interacts with host UBE3A/E6AP. Interacts with host DDX3X. Interacts with host APOA2. Interacts with host RXRA protein. Interacts with host SP110 isoform 3/Sp110b; this interaction sequesters the transcriptional corepressor SP110 away from the nucleus. Interacts with host CREB3 nuclear transcription protein; this interaction triggers cell transformation. Interacts with host ACY3. Interacts with host C1QR1. Interacts with host RBM24; this interaction, which enhances the interaction of the mature core protein with 5'-UTR, may inhibit viral translation and favor replication. Interacts with host EIF2AK2/PKR; this interaction induces the autophosphorylation of EIF2AK2. Part of the viral assembly initiation complex composed of NS2, E1, E2, NS3, NS4A, NS5A and the mature core protein. As to quaternary structure, forms a heterodimer with envelope glycoprotein E2. Interacts with mature core protein. Interacts with protease NS2. The heterodimer E1/E2 interacts with host CLDN1; this interaction plays a role in viral entry into host cell. Interacts with host SPSB2 (via C-terminus). Part of the viral assembly initiation complex composed of NS2, E1, E2, NS3, NS4A, NS5A and the mature core protein. Interacts with host NEURL3; this interaction prevents E1 binding to glycoprotein E2. In terms of assembly, forms a heterodimer with envelope glycoprotein E1. Interacts with host CD81 and SCARB1 receptors; these interactions play a role in viral entry into host cell. Interacts with host EIF2AK2/PKR; this interaction inhibits EIF2AK2 and probably allows the virus to evade the innate immune response. Interacts with host CD209/DC-SIGN and CLEC4M/DC-SIGNR. Interact with host SPCS1; this interaction is essential for viral particle assembly. Interacts with protease NS2. The heterodimer E1/E2 interacts with host CLDN1; this interaction plays a role in viral entry into host cell. Part of the viral assembly initiation complex composed of NS2, E1, E2, NS3, NS4A, NS5A and the mature core protein. Interacts with host SLC3A2/4F2hc; the interaction may facilitate viral entry into host cell. Interacts with human PLSCR1. Homohexamer. Homoheptamer. Interacts with protease NS2. As to quaternary structure, homodimer. Interacts with host SPCS1; this interaction is essential for viral particle assembly. Interacts with envelope glycoprotein E1. Interacts with envelope glycoprotein E2. Interacts with viroporin p7. Interacts with serine protease/helicase NS3. Part of the replication complex composed of NS2, NS3, NS4A, NS4B, NS5A and the RNA-directed RNA polymerase embedded in an ER-derived membranous web. Part of the viral assembly initiation complex composed of NS2, E1, E2, NS3, NS4A, NS5A and the mature core protein. In terms of assembly, interacts with protease NS2. Interacts with non-structural protein 4A; this interaction stabilizes the folding of NS3 serine protease. NS3-NS4A interaction is essential for NS3 activation and allows membrane anchorage of the latter. NS3/NS4A complex also prevents phosphorylation of host IRF3, thus preventing the establishment of dsRNA induced antiviral state. Interacts with host MAVS; this interaction leads to the cleavage and inhibition of host MAVS. Interacts with host TICAM1; this interaction leads to the cleavage and inhibition of host TICAM1. Interacts with host TANK-binding kinase/TBK1; this interaction results in the inhibition of the association between TBK1 and IRF3, which leads to the inhibition of IRF3 activation. Interacts with host RBM24. Part of the replication complex composed of NS2, NS3, NS4A, NS4B, NS5A and the RNA-directed RNA polymerase embedded in an ER-derived membranous web. Part of the viral assembly initiation complex composed of NS2, E1, E2, NS3, NS4A, NS5A and the mature core protein. Interacts with NS3 serine protease; this interaction stabilizes the folding of NS3 serine protease. NS3-NS4A interaction is essential for NS3 activation and allows membrane anchorage of the latter. Interacts with non-structural protein 5A (via N-terminus). Part of the replication complex composed of NS2, NS3, NS4A, NS4B, NS5A and the RNA-directed RNA polymerase embedded in an ER-derived membranous web. Part of the viral assembly initiation complex composed of NS2, E1, E2, NS3, NS4A, NS5A and the mature core protein. As to quaternary structure, homomultimer. Interacts with non-structural protein NS5A. Interacts with host PLA2G4C; this interaction likely initiates the recruitment of replication complexes to lipid droplets. Interacts with host STING; this interaction disrupts the interaction between STING and TBK1 thereby suppressing the interferon signaling. Part of the replication complex composed of NS2, NS3, NS4A, NS4B, NS5A and the RNA-directed RNA polymerase embedded in an ER-derived membranous web. In terms of assembly, monomer. Homodimer; dimerization is required for RNA-binding. Interacts with the mature core protein. Interacts (via N-terminus) with non-structural protein 4A. Interacts with non-structural protein 4B. Interacts (via region D2) with RNA-directed RNA polymerase. Part of the viral assembly initiation complex composed of NS2, E1, E2, NS3, NS4A, NS5A and the mature core protein. Part of the replication complex composed of NS2, NS3, NS4A, NS4B, NS5A and the RNA-directed RNA polymerase embedded in an ER-derived membranous web. Interacts with host GRB2. Interacts with host BIN1. Interacts with host PIK3R1. Interacts with host SRCAP. Interacts with host FKBP8. Interacts (via C-terminus) with host VAPB (via MSP domain). Interacts with host EIF2AK2/PKR; this interaction leads to disruption of EIF2AK2 dimerization by NS5A and probably allows the virus to evade the innate immune response. Interacts (via N-terminus) with host PACSIN2 (via N-terminus); this interaction attenuates protein kinase C alpha-mediated phosphorylation of PACSIN2 by disrupting the interaction between PACSIN2 and PRKCA. Interacts (via N-terminus) with host SRC kinase (via SH2 domain). Interacts with most Src-family kinases. Interacts with host IFI27 and SKP2; promotes the ubiquitin-mediated proteasomal degradation of NS5A. Interacts with host GPS2. Interacts with host TNFRSF21; this interaction allows the modulation by the virus of JNK, p38 MAPK, STAT3, and Akt signaling pathways in a DR6-dependent manner. Interacts (via N-terminus) with host CIDEB (via N-terminus); this interaction seems to regulate the association of HCV particles with APOE. Interacts with host CHKA/Choline Kinase-alpha; CHKA bridges host PI4KA and NS5A and potentiates NS5A-stimulated PI4KA activity, which then facilitates the targeting of the ternary complex to the ER for viral replication. Interacts with host SPSB2 (via C-terminus); this interaction targets NS5A for ubiquitination and degradation. Interacts with host RAB18; this interaction may promote the association of NS5A and other replicase components with lipid droplets. Interacts (via region D2) with host PPIA/CYPA; the interaction stimulates RNA-binding ability of NS5A and is dependent on the peptidyl-prolyl cis-trans isomerase activity of PPIA/CYPA. Interacts with host TRIM14; this interaction induces the degradation of NS5A. Homooligomer. Interacts with non-structural protein 5A. Interacts with host VAPB. Interacts with host PRK2/PKN2. Interacts with host HNRNPA1 and SEPT6; these interactions facilitate viral replication. Part of the replication complex composed of NS2, NS3, NS4A, NS4B, NS5A and the RNA-directed RNA polymerase. Zn(2+) serves as cofactor. Requires Mg(2+) as cofactor. Post-translationally, specific enzymatic cleavages in vivo yield mature proteins. The structural proteins, core, E1, E2 and p7 are produced by proteolytic processing by host signal peptidases. The core protein precursor is synthesized as a 23 kDa, which is retained in the ER membrane through the hydrophobic signal peptide. Cleavage by the signal peptidase releases the 21 kDa mature core protein. The cleavage of the core protein precursor occurs between aminoacids 176 and 188 but the exact cleavage site is not known. Some degraded forms of the core protein appear as well during the course of infection. The other proteins (p7, NS2, NS3, NS4A, NS4B, NS5A and NS5B) are cleaved by the viral proteases. Autoprocessing between NS2 and NS3 is mediated by the NS2 cysteine protease catalytic domain and regulated by the NS3 N-terminal domain. In terms of processing, phosphorylated by host PKC and PKA. Ubiquitinated; mediated by UBE3A and leading to core protein subsequent proteasomal degradation. Post-translationally, highly N-glycosylated. In terms of processing, palmitoylation is required for NS2/3 autoprocessing and E2 recruitment to membranes. Palmitoylated. This modification may play a role in its polymerization or in protein-protein interactions. Post-translationally, phosphorylated on serines in a basal form termed p56. p58 is a hyperphosphorylated form of p56. p56 and p58 coexist in the cell in roughly equivalent amounts. Hyperphosphorylation is dependent on the presence of NS4A. Host CSNK1A1/CKI-alpha or RPS6KB1 kinases may be responsible for NS5A phosphorylation. In terms of processing, tyrosine phosphorylation is essential for the interaction with host SRC. The N-terminus is phosphorylated by host PRK2/PKN2.

It localises to the host endoplasmic reticulum membrane. Its subcellular location is the host mitochondrion membrane. The protein localises to the virion. The protein resides in the host cytoplasm. It is found in the host nucleus. It localises to the host lipid droplet. Its subcellular location is the virion membrane. The protein localises to the host mitochondrion. The protein resides in the host cell membrane. It is found in the host perinuclear region. The catalysed reaction is Hydrolysis of four peptide bonds in the viral precursor polyprotein, commonly with Asp or Glu in the P6 position, Cys or Thr in P1 and Ser or Ala in P1'.. The enzyme catalyses a ribonucleoside 5'-triphosphate + H2O = a ribonucleoside 5'-diphosphate + phosphate + H(+). It carries out the reaction ATP + H2O = ADP + phosphate + H(+). It catalyses the reaction RNA(n) + a ribonucleoside 5'-triphosphate = RNA(n+1) + diphosphate. Inhibited by the antiviral drug hexamethylene amiloride. Inhibition by amantadine appears to be genotype-dependent. Also inhibited by long-alkyl-chain iminosugar derivatives. Its activity is regulated as follows. Activity is up-regulated by PRK2/PKN2-mediated phosphorylation. Its function is as follows. Packages viral RNA to form a viral nucleocapsid, and promotes virion budding. Participates in the viral particle production as a result of its interaction with the non-structural protein 5A. Binds RNA and may function as a RNA chaperone to induce the RNA structural rearrangements taking place during virus replication. Modulates viral translation initiation by interacting with viral IRES and 40S ribosomal subunit. Affects various cell signaling pathways, host immunity and lipid metabolism. Prevents the establishment of cellular antiviral state by blocking the interferon-alpha/beta (IFN-alpha/beta) and IFN-gamma signaling pathways and by blocking the formation of phosphorylated STAT1 and promoting ubiquitin-mediated proteasome-dependent degradation of STAT1. Activates STAT3 leading to cellular transformation. Regulates the activity of cellular genes, including c-myc and c-fos. May repress the promoter of p53, and sequester CREB3 and SP110 isoform 3/Sp110b in the cytoplasm. Represses cell cycle negative regulating factor CDKN1A, thereby interrupting an important check point of normal cell cycle regulation. Targets transcription factors involved in the regulation of inflammatory responses and in the immune response: suppresses TNF-induced NF-kappa-B activation, and activates AP-1. Binds to dendritic cells (DCs) via C1QR1, resulting in down-regulation of T-lymphocytes proliferation. Alters lipid metabolism by interacting with hepatocellular proteins involved in lipid accumulation and storage. Induces up-regulation of FAS promoter activity, and thereby contributes to the increased triglyceride accumulation in hepatocytes (steatosis). Functionally, forms a heterodimer with envelope glycoprotein E2, which mediates virus attachment to the host cell, virion internalization through clathrin-dependent endocytosis and fusion with host membrane. Fusion with the host cell is most likely mediated by both E1 and E2, through conformational rearrangements of the heterodimer required for fusion rather than a classical class II fusion mechanism. E1/E2 heterodimer binds host apolipoproteins such as APOB and ApoE thereby forming a lipo-viro-particle (LVP). APOE associated to the LVP allows the initial virus attachment to cell surface receptors such as the heparan sulfate proteoglycans (HSPGs), syndecan-1 (SDC1), syndecan-1 (SDC2), the low-density lipoprotein receptor (LDLR) and scavenger receptor class B type I (SCARB1). The cholesterol transfer activity of SCARB1 allows E2 exposure and binding of E2 to SCARB1 and the tetraspanin CD81. E1/E2 heterodimer binding on CD81 activates the epithelial growth factor receptor (EGFR) signaling pathway. Diffusion of the complex E1-E2-EGFR-SCARB1-CD81 to the cell lateral membrane allows further interaction with Claudin 1 (CLDN1) and occludin (OCLN) to finally trigger HCV entry. Forms a heterodimer with envelope glycoprotein E1, which mediates virus attachment to the host cell, virion internalization through clathrin-dependent endocytosis and fusion with host membrane. Fusion with the host cell is most likely mediated by both E1 and E2, through conformational rearrangements of the heterodimer required for fusion rather than a classical class II fusion mechanism. The interaction between envelope glycoprotein E2 and host apolipoprotein E/APOE allows the proper assembly, maturation and infectivity of the viral particles. This interaction is probably promoted via the up-regulation of cellular autophagy by the virus. E1/E2 heterodimer binds host apolipoproteins such as APOB and APOE thereby forming a lipo-viro-particle (LVP). APOE associated to the LVP allows the initial virus attachment to cell surface receptors such as the heparan sulfate proteoglycans (HSPGs), syndecan-1 (SDC1), syndecan-1 (SDC2), the low-density lipoprotein receptor (LDLR) and scavenger receptor class B type I (SCARB1). The cholesterol transfer activity of SCARB1 allows E2 exposure and binding of E2 to SCARB1 and the tetraspanin CD81. E1/E2 heterodimer binding on CD81 activates the epithelial growth factor receptor (EGFR) signaling pathway. Diffusion of the complex E1-E2-EGFR-SCARB1-CD81 to the cell lateral membrane allows further interaction with Claudin 1 (CLDN1) and occludin (OCLN) to finally trigger HCV entry. Inhibits host EIF2AK2/PKR activation, preventing the establishment of an antiviral state. Viral ligand for CD209/DC-SIGN and CLEC4M/DC-SIGNR, which are respectively found on dendritic cells (DCs), and on liver sinusoidal endothelial cells and macrophage-like cells of lymph node sinuses. These interactions allow the capture of circulating HCV particles by these cells and subsequent facilitated transmission to permissive cells such as hepatocytes and lymphocyte subpopulations. The interaction between E2 and host amino acid transporter complex formed by SLC3A2 and SLC7A5/LAT1 may facilitate viral entry into host cell. In terms of biological role, ion channel protein that acts as a viroporin and plays an essential role in the assembly, envelopment and secretion of viral particles. Regulates the host cell secretory pathway, which induces the intracellular retention of viral glycoproteins and favors assembly of viral particles. Creates a pore in acidic organelles and releases Ca(2+) and H(+) in the cytoplasm of infected cells, leading to a productive viral infection. High levels of cytoplasmic Ca(2+) may trigger membrane trafficking and transport of viral ER-associated proteins to viroplasms, sites of viral genome replication. This ionic imbalance induces the assembly of the inflammasome complex, which triggers the maturation of pro-IL-1beta into IL-1beta through the action of caspase-1. Targets also host mitochondria and induces mitochondrial depolarization. In addition of its role as a viroporin, acts as a lipid raft adhesion factor. Its function is as follows. Cysteine protease required for the proteolytic auto-cleavage between the non-structural proteins NS2 and NS3. The N-terminus of NS3 is required for the function of NS2 protease (active region NS2-3). Promotes the initiation of viral particle assembly by mediating the interaction between structural and non-structural proteins. Functionally, displays three enzymatic activities: serine protease with a chymotrypsin-like fold, NTPase and RNA helicase. NS3 serine protease, in association with NS4A, is responsible for the cleavages of NS3-NS4A, NS4A-NS4B, NS4B-NS5A and NS5A-NS5B. The NS3/NS4A complex prevents phosphorylation of host IRF3, thus preventing the establishment of dsRNA induced antiviral state. The NS3/NS4A complex induces host amino acid transporter component SLC3A2, thus contributing to HCV propagation. NS3 RNA helicase binds to RNA and unwinds both dsDNA and dsRNA in the 3' to 5' direction, and likely resolves RNA complicated stable secondary structures in the template strand. Binds a single ATP and catalyzes the unzipping of a single base pair of dsRNA. Inhibits host antiviral proteins TBK1 and IRF3 thereby preventing the establishment of an antiviral state. Cleaves host MAVS/CARDIF thereby preventing the establishment of an antiviral state. Cleaves host TICAM1/TRIF, thereby disrupting TLR3 signaling and preventing the establishment of an antiviral state. Induces a specific membrane alteration that serves as a scaffold for the virus replication complex. This membrane alteration gives rise to the so-called ER-derived membranous web that contains the replication complex. NS4B self-interaction contributes to its function in membranous web formation. Promotes host TRIF protein degradation in a CASP8-dependent manner thereby inhibiting host TLR3-mediated interferon signaling. Disrupts the interaction between STING and TBK1 contributing to the inhibition of interferon signaling. In terms of biological role, phosphorylated protein that is indispensable for viral replication and assembly. Both hypo- and hyperphosphorylated states are required for the viral life cycle. The hyperphosphorylated form of NS5A is an inhibitor of viral replication. Involved in RNA-binding and especially in binding to the viral genome. Zinc is essential for RNA-binding. Participates in the viral particle production as a result of its interaction with the mature viral core protein. Its interaction with host VAPB may target the viral replication complex to vesicles. Down-regulates viral IRES translation initiation. Mediates interferon resistance, presumably by interacting with and inhibiting host EIF2AK2/PKR. Prevents BIN1-induced apoptosis. Acts as a transcriptional activator of some host genes important for viral replication when localized in the nucleus. Via the interaction with host PACSIN2, modulates lipid droplet formation in order to promote virion assembly. Modulates TNFRSF21/DR6 signaling pathway for viral propagation. Its function is as follows. RNA-dependent RNA polymerase that performs primer-template recognition and RNA synthesis during viral replication. Initiates RNA transcription/replication at a flavin adenine dinucleotide (FAD), resulting in a 5'- FAD cap on viral RNAs. In this way, recognition of viral 5' RNA by host pattern recognition receptors can be bypassed, thereby evading activation of antiviral pathways. This chain is Genome polyprotein, found in Homo sapiens (Human).